The following is a 175-amino-acid chain: Gamma-crystallin M1 (175 aa).

Beta/gamma crystallin 'Greek key' domains lie at 2–40 (GKII…RVES), 41–86 (GCFM…RYPY), 89–121 (FRMR…RMSD), and 130–172 (GHWL…RRIT).

Belongs to the beta/gamma-crystallin family. In terms of assembly, monomer.

In terms of biological role, crystallins are the dominant structural components of the vertebrate eye lens. The polypeptide is Gamma-crystallin M1 (GM1) (Chiloscyllium indicum (Slender bamboo shark)).